The sequence spans 294 residues: 4-hydroxy-tetrahydrodipicolinate synthase (294 aa).

T45 provides a ligand contact to pyruvate. Catalysis depends on Y133, which acts as the Proton donor/acceptor. K161 serves as the catalytic Schiff-base intermediate with substrate. I203 provides a ligand contact to pyruvate.

Belongs to the DapA family. As to quaternary structure, homotetramer; dimer of dimers.

The protein resides in the cytoplasm. The catalysed reaction is L-aspartate 4-semialdehyde + pyruvate = (2S,4S)-4-hydroxy-2,3,4,5-tetrahydrodipicolinate + H2O + H(+). The protein operates within amino-acid biosynthesis; L-lysine biosynthesis via DAP pathway; (S)-tetrahydrodipicolinate from L-aspartate: step 3/4. In terms of biological role, catalyzes the condensation of (S)-aspartate-beta-semialdehyde [(S)-ASA] and pyruvate to 4-hydroxy-tetrahydrodipicolinate (HTPA). The sequence is that of 4-hydroxy-tetrahydrodipicolinate synthase from Shewanella sp. (strain MR-7).